The following is a 129-amino-acid chain: Small ribosomal subunit protein uS8 (129 aa).

The protein belongs to the universal ribosomal protein uS8 family. As to quaternary structure, part of the 30S ribosomal subunit. Contacts proteins S5 and S12.

In terms of biological role, one of the primary rRNA binding proteins, it binds directly to 16S rRNA central domain where it helps coordinate assembly of the platform of the 30S subunit. The chain is Small ribosomal subunit protein uS8 from Legionella pneumophila (strain Corby).